We begin with the raw amino-acid sequence, 79 residues long: RNA-binding protein Hfq (79 aa).

In terms of domain architecture, Sm spans 10–69 (GPFLNALRKEHVPVSIYLVNGIKLQGNIESFDQYVVLLRNTVTQMVYKHAISTVVPARAV).

Belongs to the Hfq family. Homohexamer.

Functionally, RNA chaperone that binds small regulatory RNA (sRNAs) and mRNAs to facilitate mRNA translational regulation in response to envelope stress, environmental stress and changes in metabolite concentrations. Also binds with high specificity to tRNAs. This is RNA-binding protein Hfq from Cupriavidus necator (strain ATCC 17699 / DSM 428 / KCTC 22496 / NCIMB 10442 / H16 / Stanier 337) (Ralstonia eutropha).